The primary structure comprises 247 residues: Agamous-like MADS-box protein FUL-L (247 aa).

The MADS-box domain occupies 1–61 (MGRGRVQLKR…GKLFEYSSDS (61 aa)). A K-box domain is found at 88–178 (QGNWSMDYPK…AKKVKEKEKV (91 aa)). A disordered region spans residues 224 to 247 (EDGAEARPSPNTLMPPWMLRHVNE).

As to expression, expressed in tendrils and flowers.

It is found in the nucleus. Probable transcription factor involved in flower development. The polypeptide is Agamous-like MADS-box protein FUL-L (Vitis vinifera (Grape)).